A 484-amino-acid polypeptide reads, in one-letter code: tRNA sulfurtransferase (484 aa).

The region spanning 63–167 (QGIRERLSCM…DQRLFVVHDQ (105 aa)) is the THUMP domain. Residues 185–186 (LM), K267, G289, and Q298 each bind ATP. Cysteines 346 and 457 form a disulfide. Residues 405–483 (ALAGQVILDI…GHANVRVYRP (79 aa)) enclose the Rhodanese domain. The active-site Cysteine persulfide intermediate is C457.

The protein belongs to the ThiI family.

The protein localises to the cytoplasm. The enzyme catalyses [ThiI sulfur-carrier protein]-S-sulfanyl-L-cysteine + a uridine in tRNA + 2 reduced [2Fe-2S]-[ferredoxin] + ATP + H(+) = [ThiI sulfur-carrier protein]-L-cysteine + a 4-thiouridine in tRNA + 2 oxidized [2Fe-2S]-[ferredoxin] + AMP + diphosphate. It catalyses the reaction [ThiS sulfur-carrier protein]-C-terminal Gly-Gly-AMP + S-sulfanyl-L-cysteinyl-[cysteine desulfurase] + AH2 = [ThiS sulfur-carrier protein]-C-terminal-Gly-aminoethanethioate + L-cysteinyl-[cysteine desulfurase] + A + AMP + 2 H(+). Its pathway is cofactor biosynthesis; thiamine diphosphate biosynthesis. Its function is as follows. Catalyzes the ATP-dependent transfer of a sulfur to tRNA to produce 4-thiouridine in position 8 of tRNAs, which functions as a near-UV photosensor. Also catalyzes the transfer of sulfur to the sulfur carrier protein ThiS, forming ThiS-thiocarboxylate. This is a step in the synthesis of thiazole, in the thiamine biosynthesis pathway. The sulfur is donated as persulfide by IscS. In Pseudomonas syringae pv. syringae (strain B728a), this protein is tRNA sulfurtransferase.